The sequence spans 236 residues: 3-deoxy-D-manno-octulosonic acid kinase (236 aa).

Asp167 is an active-site residue.

Belongs to the protein kinase superfamily. KdkA/RfaP family.

Its subcellular location is the cell inner membrane. The catalysed reaction is an alpha-Kdo-(2-&gt;6)-lipid IVA + ATP = a 4-O-phospho-alpha-Kdo-(2-&gt;6)-lipid IVA + ADP + H(+). It participates in bacterial outer membrane biogenesis; LPS core biosynthesis. Catalyzes the ATP-dependent phosphorylation of the 3-deoxy-D-manno-octulosonic acid (Kdo) residue in Kdo-lipid IV(A) at the 4-OH position. This Vibrio vulnificus (strain CMCP6) protein is 3-deoxy-D-manno-octulosonic acid kinase.